A 1200-amino-acid polypeptide reads, in one-letter code: Metabotropic glycine receptor (1200 aa).

The first 24 residues, 1 to 24, serve as a signal peptide directing secretion; sequence MGAMAYSLLFCLLLAHLGLGEVGA. The disordered stretch occupies residues 25-62; it reads SLDPPGRPDSPRERTPRGKQHGQQLPRASAPDPSIPWS. Over 25 to 417 the chain is Extracellular; it reads SLDPPGRPDS…CFVQEDKYLR (393 aa). The interval 85–281 is cache-like region; that stretch reads YLYTGDFHQL…CENGSYKPGW (197 aa). Residues Asn98 and Asn143 are each glycosylated (N-linked (GlcNAc...) asparagine). A disulfide bridge links Cys99 with Cys272. Positions 172 and 173 each coordinate glycine. The N-linked (GlcNAc...) asparagine glycan is linked to Asn215. The interval 234-253 is disordered; it reads LHRRGSNQGPRGLGHSWRRR. Glu271 lines the glycine pocket. The N-linked (GlcNAc...) asparagine glycan is linked to Asn274. Asp307 provides a ligand contact to glycine. The N-linked (GlcNAc...) asparagine glycan is linked to Asn333. Residues 418–439 traverse the membrane as a helical segment; the sequence is LAIISFQALCMLLDFVSMLVVY. Residues 440–451 are Cytoplasmic-facing; it reads HFRKAKSIRASG. The chain crosses the membrane as a helical span at residues 452–474; sequence LILLETILFGSLLLYFPVVILYF. Residues 475 to 478 are Extracellular-facing; that stretch reads EPST. A helical transmembrane segment spans residues 479–501; the sequence is FRCILLRWARLLGFATVYGTVTL. Residues Cys481 and Cys573 are joined by a disulfide bond. The Cytoplasmic segment spans residues 502 to 525; the sequence is KLHRVLKVFLSRTAQRIPYMTGGR. A helical membrane pass occupies residues 526–547; that stretch reads VMRMLAVIVLVVFWFLVGWTSS. The Extracellular segment spans residues 548-576; the sequence is MCQNLERDILLVGQGQTSDHLTFNMCLID. A helical membrane pass occupies residues 577–597; sequence RWDYMTAVAEFLFLLWGIYLC. The Cytoplasmic segment spans residues 598 to 611; it reads YAVRTVPSAFHEPR. Residues 612–633 form a helical membrane-spanning segment; it reads YMAVAVHNELIITAIFHTIRFV. At 634-642 the chain is on the extracellular side; sequence LASRLQPDW. Residues 643–664 form a helical membrane-spanning segment; it reads MLMLYFAHAHLTVTVTIGLLLI. Over 665–1200 the chain is Cytoplasmic; that stretch reads PKFSHSSNNP…SANKIPGPQK (536 aa). Residues Ser694, Ser705, and Ser708 each carry the phosphoserine modification. The interval 757–875 is disordered; sequence RITEIPETVS…EAESTESVPL (119 aa). Basic and acidic residues-rich tracts occupy residues 769–781 and 819–828; these read CSKEDKEGTDHSA and STYDHVRDQT. Lys774 is covalently cross-linked (Glycyl lysine isopeptide (Lys-Gly) (interchain with G-Cter in ubiquitin)). A compositionally biased stretch (low complexity) spans 845 to 856; that stretch reads ENSTLESLSSKK. Residues Ser865 and Ser944 each carry the phosphoserine modification. The disordered stretch occupies residues 947–988; sequence DNVETIPNSGHMEEPRKPQKSGIMKQQRVSLPTANPDVSSGI. Positions 973-988 are enriched in polar residues; sequence QRVSLPTANPDVSSGI. The VCPWE motif 1 signature appears at 1000 to 1004; the sequence is VCPWE. The residue at position 1059 (Ser1059) is a Phosphoserine. A VCPWE motif 2 motif is present at residues 1065 to 1069; it reads VCPWE. Ser1074 carries the phosphoserine modification. The segment at 1130-1160 is disordered; the sequence is QMGDQEKQTSSSVDIIPGSCNSSNNSHQPLT. Residues 1165-1169 carry the VCPWE motif 3 motif; it reads VCPWE. A disordered region spans residues 1177 to 1200; it reads NAERSVTLPASSALSANKIPGPQK. Residues 1178 to 1191 show a composition bias toward polar residues; that stretch reads AERSVTLPASSALS.

The protein belongs to the G-protein coupled receptor 3 family. Homodimer. Associates with the RGS7-GNB5 complex, promoting its localization to the cell membrane and regulating its GTPase activator activity. Interacts (via VCPWE motifs) with GNAO1. Interacts with GPC4. Interacts with EGFLAM. As to expression, highly expressed in brain. Expressed in several brain regions including the cerebral cortex, hippocampus, cerebellum and caudate putamen. Only expressed in neurons, and not in microglia, oligodendrocytes or astrocytes. Expressed in the visual center of the cerebral cortex. Also expressed in the eye, including photoreceptors, ganglion cells and trabecular meshwork.

It localises to the cell membrane. It is found in the postsynaptic cell membrane. The protein localises to the presynaptic cell membrane. The protein resides in the nucleus. Functionally, metabotropic receptor for glycine that controls synapse formation and function in the brain. Acts as an atypical G-protein coupled receptor that recruits and regulates the RGS7-GNB5 complex instead of activating G proteins. In absence of glycine ligand, promotes the GTPase activator activity of RGS7, increasing the GTPase activity of G protein alpha subunits, thereby driving them into their inactive GDP-bound form. Glycine-binding changes the conformation of the intracellular surface, inhibiting the GTPase activator activity of the RGS7-GNB5 complex, promoting G protein alpha subunits into their active GTP-bound form and regulating cAMP levels. Also able to bind taurine, a compound closely related to glycine, but with a two-fold lower affinity. Glycine receptor-dependent regulation of cAMP controls key ion channels, kinases and neurotrophic factors involved in neuronal excitability and synaptic transmission. Plays a pivotal role in regulating mood and cognition via its ability to regulate neuronal excitability in L2/L3 pyramidal neurons of the prefrontal cortex. Also involved in spatial learning by regulating hippocampal CA1 neuronal excitability. Acts as a synaptic organizer in the hippocampus, required for proper mossy fiber-CA3 neurocircuitry establishment, structure and function: induces presynaptic differentiation in contacting axons via its interaction with GPC4. In addition to glycine, may also act as a receptor for osteocalcin (Bglap or Bglap2) hormone: osteocalcin-binding initiates a signaling response that prevents neuronal apoptosis in the hippocampus and regulates the synthesis of neurotransmitters. In Mus musculus (Mouse), this protein is Metabotropic glycine receptor.